The following is a 151-amino-acid chain: Arginine regulator (151 aa).

The protein belongs to the ArgR family.

Its subcellular location is the cytoplasm. It participates in amino-acid degradation; L-arginine degradation via ADI pathway. Functionally, regulates the transcription of the arc operon, involved in arginine catabolism. The sequence is that of Arginine regulator (argR1) from Clostridium perfringens (strain 13 / Type A).